The primary structure comprises 149 residues: Large ribosomal subunit protein bL9 (149 aa).

The protein belongs to the bacterial ribosomal protein bL9 family.

Functionally, binds to the 23S rRNA. In Laribacter hongkongensis (strain HLHK9), this protein is Large ribosomal subunit protein bL9.